Reading from the N-terminus, the 445-residue chain is CBL-interacting serine/threonine-protein kinase 5 (445 aa).

A Protein kinase domain is found at 12–267 (YEMGRLLGKG…IPAIMRTPWL (256 aa)). ATP contacts are provided by residues 18–26 (LGKGTFAKV) and Lys41. The active-site Proton acceptor is Asp135. Positions 153–182 (DFGLSALPEQILQDGLLHTQCGTPAYVAPE) are activation loop. The residue at position 157 (Ser157) is a Phosphoserine. At Thr171 the chain carries Phosphothreonine. An NAF domain is found at 307-332 (ISPKFFNAFEFISSMSSGFDLSSLFE). The interval 336–366 (KVQSVFTSRSSATEVMEKIETVTKEMNMKVK) is PPI.

This sequence belongs to the protein kinase superfamily. CAMK Ser/Thr protein kinase family. SNF1 subfamily. The cofactor is Mn(2+).

It catalyses the reaction L-seryl-[protein] + ATP = O-phospho-L-seryl-[protein] + ADP + H(+). The enzyme catalyses L-threonyl-[protein] + ATP = O-phospho-L-threonyl-[protein] + ADP + H(+). In terms of biological role, CIPK serine-threonine protein kinases interact with CBL proteins. Binding of a CBL protein to the regulatory NAF domain of CIPK protein lead to the activation of the kinase in a calcium-dependent manner. This chain is CBL-interacting serine/threonine-protein kinase 5 (CIPK5), found in Arabidopsis thaliana (Mouse-ear cress).